The primary structure comprises 115 residues: Large ribosomal subunit protein uL24 (115 aa).

The protein belongs to the universal ribosomal protein uL24 family. In terms of assembly, part of the 50S ribosomal subunit.

Its function is as follows. One of two assembly initiator proteins, it binds directly to the 5'-end of the 23S rRNA, where it nucleates assembly of the 50S subunit. One of the proteins that surrounds the polypeptide exit tunnel on the outside of the subunit. The polypeptide is Large ribosomal subunit protein uL24 (Amoebophilus asiaticus (strain 5a2)).